Here is a 296-residue protein sequence, read N- to C-terminus: Acetylglutamate kinase (296 aa).

Residues 68–69 (GG), arginine 90, and asparagine 193 each bind substrate.

Belongs to the acetylglutamate kinase family. ArgB subfamily.

The protein resides in the cytoplasm. The enzyme catalyses N-acetyl-L-glutamate + ATP = N-acetyl-L-glutamyl 5-phosphate + ADP. It participates in amino-acid biosynthesis; L-arginine biosynthesis; N(2)-acetyl-L-ornithine from L-glutamate: step 2/4. Catalyzes the ATP-dependent phosphorylation of N-acetyl-L-glutamate. The polypeptide is Acetylglutamate kinase (Acidothermus cellulolyticus (strain ATCC 43068 / DSM 8971 / 11B)).